Here is a 416-residue protein sequence, read N- to C-terminus: Floricaula/leafy homolog 2 (416 aa).

A disordered region spans residues E154–Q237. Over residues A210–N225 the composition is skewed to acidic residues. 3 consecutive DNA-binding regions follow at residues R238–F242, N307–Y314, and Y378–T381.

The protein belongs to the FLO/LFY family. Expressed in floral meristems and in indeterminate vegetative meristems.

Its subcellular location is the nucleus. Functionally, probable transcription factor that act to specify determinacy in the progenitor cells for both flowers and leaves. The chain is Floricaula/leafy homolog 2 (FL2) from Nicotiana tabacum (Common tobacco).